A 276-amino-acid polypeptide reads, in one-letter code: Elongation factor Ts, mitochondrial (276 aa).

The protein belongs to the EF-Ts family.

The protein localises to the mitochondrion. Functionally, associates with the EF-Tu.GDP complex and induces the exchange of GDP to GTP. It remains bound to the aminoacyl-tRNA.EF-Tu.GTP complex up to the GTP hydrolysis stage on the ribosome. The chain is Elongation factor Ts, mitochondrial from Leishmania infantum.